The following is a 183-amino-acid chain: Archaemetzincin (183 aa).

His-131 lines the Zn(2+) pocket. Catalysis depends on Glu-132, which acts as the Proton acceptor. Residues His-135, His-141, Cys-142, Cys-147, Cys-166, and Cys-169 each contribute to the Zn(2+) site.

It belongs to the peptidase M54 family. Monomer. The cofactor is Zn(2+).

Its function is as follows. Probable zinc metalloprotease whose natural substrate is unknown. This Saccharolobus islandicus (strain L.S.2.15 / Lassen #1) (Sulfolobus islandicus) protein is Archaemetzincin.